The primary structure comprises 256 residues: Probable sulfite/organosulfonate exporter TauE (256 aa).

8 consecutive transmembrane segments (helical) span residues 5–25 (LLLP…FQTV), 33–53 (IVMG…AAVV), 76–96 (AVAA…LVLE), 103–123 (ATLL…SAAL), 142–162 (VFGG…IFQF), 172–190 (IRCA…RTLF), 199–219 (AAVC…TLLG), and 236–256 (FGVL…AWVL).

The protein belongs to the 4-toluene sulfonate uptake permease (TSUP) (TC 2.A.102) family.

It is found in the cell inner membrane. Could be a sulfite/organosulfonate exporter with a wide substrate range, including 3-sulfolactate and 3-sulfopyruvate. In Cupriavidus necator (strain ATCC 17699 / DSM 428 / KCTC 22496 / NCIMB 10442 / H16 / Stanier 337) (Ralstonia eutropha), this protein is Probable sulfite/organosulfonate exporter TauE.